The following is a 390-amino-acid chain: Acetate kinase (390 aa).

Asn-10 provides a ligand contact to Mg(2+). Residue Lys-17 coordinates ATP. A substrate-binding site is contributed by Arg-89. Residue Asp-146 is the Proton donor/acceptor of the active site. Residues 204–208 (HLGNG), 278–280 (DMR), and 323–327 (GIGEN) contribute to the ATP site. Glu-376 contacts Mg(2+).

This sequence belongs to the acetokinase family. As to quaternary structure, homodimer. The cofactor is Mg(2+). Mn(2+) is required as a cofactor.

It localises to the cytoplasm. It carries out the reaction acetate + ATP = acetyl phosphate + ADP. The protein operates within metabolic intermediate biosynthesis; acetyl-CoA biosynthesis; acetyl-CoA from acetate: step 1/2. In terms of biological role, catalyzes the formation of acetyl phosphate from acetate and ATP. Can also catalyze the reverse reaction. This chain is Acetate kinase, found in Mycoplasma pneumoniae (strain ATCC 29342 / M129 / Subtype 1) (Mycoplasmoides pneumoniae).